We begin with the raw amino-acid sequence, 385 residues long: uncharacterized protein (385 aa).

Transmembrane regions (helical) follow at residues 17–37 (ILII…FIFT), 72–92 (TELM…WFLL), 107–127 (WILK…KCIT), 155–175 (ICLI…FYII), 191–211 (WIQA…LVLL), 295–315 (AFPS…FYFL), 326–346 (ITLL…IVVN), and 354–374 (ITFT…FNSF).

The protein resides in the membrane. This is an uncharacterized protein from Mycoplasma capricolum subsp. capricolum (strain California kid / ATCC 27343 / NCTC 10154).